A 423-amino-acid chain; its full sequence is UDP-N-acetylglucosamine 1-carboxyvinyltransferase 2 (423 aa).

23 to 24 (KN) is a binding site for phosphoenolpyruvate. Residue Arg95 participates in UDP-N-acetyl-alpha-D-glucosamine binding. Catalysis depends on Cys119, which acts as the Proton donor. Cys119 is modified (2-(S-cysteinyl)pyruvic acid O-phosphothioketal). 2 residues coordinate UDP-N-acetyl-alpha-D-glucosamine: Asp306 and Ile328.

It belongs to the EPSP synthase family. MurA subfamily.

The protein localises to the cytoplasm. The enzyme catalyses phosphoenolpyruvate + UDP-N-acetyl-alpha-D-glucosamine = UDP-N-acetyl-3-O-(1-carboxyvinyl)-alpha-D-glucosamine + phosphate. The protein operates within cell wall biogenesis; peptidoglycan biosynthesis. Functionally, cell wall formation. Adds enolpyruvyl to UDP-N-acetylglucosamine. The protein is UDP-N-acetylglucosamine 1-carboxyvinyltransferase 2 of Symbiobacterium thermophilum (strain DSM 24528 / JCM 14929 / IAM 14863 / T).